The sequence spans 103 residues: CLAVATA3/ESR (CLE)-related protein 16 (103 aa).

The signal sequence occupies residues 1–21 (MEACSRKRRRRRAYTTSTTGY). Positions 71–103 (VSFTGQRREEENRDEVYKDDKRLVHTGPNPLHN) are disordered. The span at 76–93 (QRREEENRDEVYKDDKRL) shows a compositional bias: basic and acidic residues. Proline 98 bears the Hydroxyproline mark. Proline 98 carries an O-linked (Ara...) hydroxyproline glycan.

It belongs to the CLV3/ESR signal peptide family. Post-translationally, the O-glycosylation (arabinosylation) of the hydroxyproline Pro-98 enhances binding affinity of the CLE16p peptide for its receptor. Expressed in roots, stems, apex, seedlings, leaves, flowers and siliques.

Its subcellular location is the secreted. It localises to the extracellular space. Its function is as follows. Extracellular signal peptide that regulates cell fate. Represses root apical meristem maintenance. Regulates the transition of protophloem cells from proliferation to differentiation, thus impinging on postembryonic growth capacity of the root meristem; this signaling pathway requires CRN and CLV2. This Arabidopsis thaliana (Mouse-ear cress) protein is CLAVATA3/ESR (CLE)-related protein 16.